A 598-amino-acid chain; its full sequence is Kinetochore-associated protein KNL-2 homolog (598 aa).

The SANTA domain occupies Val-19 to Arg-111. Composition is skewed to basic and acidic residues over residues Ala-335–Gly-344 and Lys-371–Ala-381. Disordered regions lie at residues Ala-335–Lys-403, Lys-445–Glu-500, Pro-520–Ser-542, and Lys-572–Lys-598. Over residues Lys-383–Ala-392 the composition is skewed to polar residues. Over residues Gln-527–Gln-539 the composition is skewed to polar residues. The segment at Gly-538–Lys-572 is required for localization at centromeres.

This sequence belongs to the KNL2 family. In terms of tissue distribution, expressed in shoot apical meristem, leaf primordia, basal parts of emerging leaves, inflorescence meristems, young inflorescences, developing flower buds, developing sepals and pistils, styles and young siliques.

Its subcellular location is the nucleus. It is found in the nucleoplasm. The protein localises to the nuclear body. The protein resides in the nucleolus. It localises to the chromosome. Its subcellular location is the centromere. Its function is as follows. Involved in recognition of centromeres and centromeric localization of the centromere-specific histone CENH3. Required for normal progression of mitosis and meiosis. May play a role in the determination of the epigenetic status of centromeres. Binds DNA and RNA in vitro. The chain is Kinetochore-associated protein KNL-2 homolog from Arabidopsis thaliana (Mouse-ear cress).